The primary structure comprises 423 residues: Citrate synthase-like protein clz17 (423 aa).

Active-site residues include histidine 357 and aspartate 413.

This sequence belongs to the citrate synthase family.

Its pathway is secondary metabolite biosynthesis. Its function is as follows. Citrate synthase-like protein; part of the gene cluster that mediates the biosynthesis of squalestatin S1 (SQS1, also known as zaragozic acid A), a heavily oxidized fungal polyketide that offers potent cholesterol lowering activity by targeting squalene synthase (SS). SQS1 is composed of a 2,8-dioxobicyclic[3.2.1]octane-3,4,5-tricarboxyclic acid core that is connected to two lipophilic polyketide arms. These initial steps feature the priming of an unusual benzoic acid starter unit onto the highly reducing polyketide synthase clz14, followed by oxaloacetate extension and product release to generate a tricarboxylic acid containing product. The phenylalanine ammonia lyase (PAL) clz10 and the acyl-CoA ligase clz12 are involved in transforming phenylalanine into benzoyl-CoA. The citrate synthase-like protein clz17 is involved in connecting the C-alpha-carbons of the hexaketide chain and oxaloacetate to afford the tricarboxylic acid unit. The potential hydrolytic enzymes, clz11 and clz13, are in close proximity to pks2 and may participate in product release. On the other side, the tetraketide arm is synthesized by a the squalestatin tetraketide synthase clz2 and enzymatically esterified to the core in the last biosynthetic step, by the acetyltransferase clz6. The biosynthesis of the tetraketide must involve 3 rounds of chain extension. After the first and second rounds methyl-transfer occurs, and in all rounds of extension the ketoreductase and dehydratase are active. The enoyl reductase and C-MeT of clz2 are not active in the final round of extension. The acetyltransferase clz6 appears to have a broad substrate selectivity for its acyl CoA substrate, allowing the in vitro synthesis of novel squalestatins. The biosynthesis of SQS1 requires several oxidative steps likely performed by oxidoreductases clz3, clz15 and clz16. Finally, in support of the identification of the cluster as being responsible for SQS1 production, the cluster contains a gene encoding a putative squalene synthase (SS) clz20, suggesting a likely mechanism for self-resistance. The polypeptide is Citrate synthase-like protein clz17 (Cochliobolus lunatus (Filamentous fungus)).